The sequence spans 186 residues: Ribosome-recycling factor (186 aa).

It belongs to the RRF family.

It is found in the cytoplasm. Functionally, responsible for the release of ribosomes from messenger RNA at the termination of protein biosynthesis. May increase the efficiency of translation by recycling ribosomes from one round of translation to another. This chain is Ribosome-recycling factor, found in Rickettsia canadensis (strain McKiel).